We begin with the raw amino-acid sequence, 76 residues long: U-actitoxin-Avd8c (76 aa).

A signal peptide spans 1–16; that stretch reads LVIVFVVLLGVPLISA. The propeptide occupies 17–33; the sequence is NEEELLAILQDQRNDAR.

This sequence belongs to the sea anemone 8 toxin family.

It localises to the secreted. The protein localises to the nematocyst. The polypeptide is U-actitoxin-Avd8c (Anemonia viridis (Snakelocks anemone)).